The primary structure comprises 490 residues: Ketol-acid reductoisomerase (NADP(+)) (490 aa).

One can recognise a KARI N-terminal Rossmann domain in the interval 16–207 (INKCRFMKKE…GGHRAGVLES (192 aa)). NADP(+) is bound by residues 44–47 (CGAQ), Lys67, Ser77, and 107–109 (DKQ). His131 is a catalytic residue. Gly157 lines the NADP(+) pocket. KARI C-terminal knotted domains lie at 208–343 (SFIA…TAPV) and 344–483 (YNEK…MKKM). Mg(2+)-binding residues include Asp216, Glu220, Glu388, and Glu392. Ser413 contacts substrate.

It belongs to the ketol-acid reductoisomerase family. Mg(2+) is required as a cofactor.

It catalyses the reaction (2R)-2,3-dihydroxy-3-methylbutanoate + NADP(+) = (2S)-2-acetolactate + NADPH + H(+). The catalysed reaction is (2R,3R)-2,3-dihydroxy-3-methylpentanoate + NADP(+) = (S)-2-ethyl-2-hydroxy-3-oxobutanoate + NADPH + H(+). Its pathway is amino-acid biosynthesis; L-isoleucine biosynthesis; L-isoleucine from 2-oxobutanoate: step 2/4. The protein operates within amino-acid biosynthesis; L-valine biosynthesis; L-valine from pyruvate: step 2/4. Its function is as follows. Involved in the biosynthesis of branched-chain amino acids (BCAA). Catalyzes an alkyl-migration followed by a ketol-acid reduction of (S)-2-acetolactate (S2AL) to yield (R)-2,3-dihydroxy-isovalerate. In the isomerase reaction, S2AL is rearranged via a Mg-dependent methyl migration to produce 3-hydroxy-3-methyl-2-ketobutyrate (HMKB). In the reductase reaction, this 2-ketoacid undergoes a metal-dependent reduction by NADPH to yield (R)-2,3-dihydroxy-isovalerate. The chain is Ketol-acid reductoisomerase (NADP(+)) from Buchnera aphidicola subsp. Acyrthosiphon pisum (strain 5A).